Consider the following 420-residue polypeptide: Sodium/proton antiporter 2 (420 aa).

The next 11 helical transmembrane spans lie at 25-45, 60-80, 94-114, 136-156, 173-193, 221-241, 242-262, 285-305, 321-341, 363-383, and 400-420; these read IALL…SVEI, IVFY…HQGF, ILLW…DNLT, LGAV…IGDV, IKNL…LMSL, LVFG…SLTG, LPPY…TDVI, GALF…AGIL, LIAS…LVAA, FCAG…VIFM, and FAFA…NFPL.

This sequence belongs to the NhaD Na(+)/H(+) (TC 2.A.62) antiporter family.

Its subcellular location is the membrane. Functionally, na(+)/H(+) antiporter that extrudes sodium in exchange for external protons. This chain is Sodium/proton antiporter 2, found in Arabidopsis thaliana (Mouse-ear cress).